We begin with the raw amino-acid sequence, 504 residues long: D-alanine--D-alanyl carrier protein ligase (504 aa).

152–153 contributes to the ATP binding site; that stretch reads TS. Residue aspartate 197 participates in D-alanine binding. Position 292-297 (292-297) interacts with ATP; it reads NTYGPT. Valine 301 contributes to the D-alanine binding site. ATP is bound by residues aspartate 383, 394 to 397, and lysine 492; that span reads YNGR. Lysine 492 serves as a coordination point for D-alanine.

The protein belongs to the ATP-dependent AMP-binding enzyme family. DltA subfamily.

It localises to the cytoplasm. The catalysed reaction is holo-[D-alanyl-carrier protein] + D-alanine + ATP = D-alanyl-[D-alanyl-carrier protein] + AMP + diphosphate. The protein operates within cell wall biogenesis; lipoteichoic acid biosynthesis. Functionally, catalyzes the first step in the D-alanylation of lipoteichoic acid (LTA), the activation of D-alanine and its transfer onto the D-alanyl carrier protein (Dcp) DltC. In an ATP-dependent two-step reaction, forms a high energy D-alanyl-AMP intermediate, followed by transfer of the D-alanyl residue as a thiol ester to the phosphopantheinyl prosthetic group of the Dcp. D-alanylation of LTA plays an important role in modulating the properties of the cell wall in Gram-positive bacteria, influencing the net charge of the cell wall. In Bacillus cytotoxicus (strain DSM 22905 / CIP 110041 / 391-98 / NVH 391-98), this protein is D-alanine--D-alanyl carrier protein ligase.